Consider the following 352-residue polypeptide: Quinolinate synthase (352 aa).

Residues histidine 55 and serine 72 each coordinate iminosuccinate. Cysteine 117 contacts [4Fe-4S] cluster. Iminosuccinate-binding positions include tyrosine 143–asparagine 145 and serine 160. Cysteine 204 lines the [4Fe-4S] cluster pocket. Residues histidine 230 to glutamate 232 and threonine 258 each bind iminosuccinate. Cysteine 303 is a binding site for [4Fe-4S] cluster.

The protein belongs to the quinolinate synthase family. Type 2 subfamily. [4Fe-4S] cluster is required as a cofactor.

It localises to the cytoplasm. It catalyses the reaction iminosuccinate + dihydroxyacetone phosphate = quinolinate + phosphate + 2 H2O + H(+). It participates in cofactor biosynthesis; NAD(+) biosynthesis; quinolinate from iminoaspartate: step 1/1. Its function is as follows. Catalyzes the condensation of iminoaspartate with dihydroxyacetone phosphate to form quinolinate. The polypeptide is Quinolinate synthase (Mycobacterium leprae (strain Br4923)).